A 229-amino-acid polypeptide reads, in one-letter code: Adenine nucleotide translocase lysine N-methyltransferase (229 aa).

Positions 1–22 (MDQDDPAEALTELREKRLGLLE) are N-terminal sequence (NTS). A helical membrane pass occupies residues 20-42 (LLEIVQAAAGSGLAVYTIWALLL). The interval 43–77 (QPGFRRVPLRLQVPYVGASARQVENVLSLLRGRPG) is methyltransferase (MTase). Residues 43-77 (QPGFRRVPLRLQVPYVGASARQVENVLSLLRGRPG) form a pre-methyltransferase (preMT) region.

This sequence belongs to the ANT/ATPSC lysine N-methyltransferase family.

Its subcellular location is the mitochondrion membrane. It catalyses the reaction L-lysyl-[protein] + 3 S-adenosyl-L-methionine = N(6),N(6),N(6)-trimethyl-L-lysyl-[protein] + 3 S-adenosyl-L-homocysteine + 3 H(+). Functionally, mitochondrial protein-lysine N-methyltransferase that trimethylates adenine nucleotide translocases ANT2/SLC25A5 and ANT3/SLC25A6, thereby regulating mitochondrial respiration. Probably also trimethylates ANT1/SLC25A4. This is Adenine nucleotide translocase lysine N-methyltransferase from Mus musculus (Mouse).